We begin with the raw amino-acid sequence, 106 residues long: Small ribosomal subunit protein uS10 (106 aa).

This sequence belongs to the universal ribosomal protein uS10 family. In terms of assembly, part of the 30S ribosomal subunit.

Functionally, involved in the binding of tRNA to the ribosomes. In Synechococcus sp. (strain CC9605), this protein is Small ribosomal subunit protein uS10.